Here is a 582-residue protein sequence, read N- to C-terminus: L-fucose isomerase (582 aa).

Residues glutamate 333 and aspartate 357 each act as proton acceptor in the active site. Glutamate 333, aspartate 357, and histidine 520 together coordinate Mn(2+).

The protein belongs to the L-fucose isomerase family. Requires Mn(2+) as cofactor.

Its subcellular location is the cytoplasm. The catalysed reaction is L-fucose = L-fuculose. Its pathway is carbohydrate degradation; L-fucose degradation; L-lactaldehyde and glycerone phosphate from L-fucose: step 1/3. In terms of biological role, converts the aldose L-fucose into the corresponding ketose L-fuculose. This chain is L-fucose isomerase, found in Vibrio vulnificus (strain YJ016).